The chain runs to 194 residues: Adenylate kinase (194 aa).

12-17 provides a ligand contact to ATP; that stretch reads GSGKTT. The interval 34 to 63 is NMP; the sequence is STGDLLREEVKKGTPLGATIASFIDNGQLV. AMP-binding positions include Thr35, Arg40, 61 to 63, 88 to 91, and Gln95; these read QLV and GFPR. Residues 130-136 form an LID region; the sequence is GRARGAD. Residue Arg131 coordinates ATP. Residues Arg133 and Arg145 each contribute to the AMP site. Arg173 is a binding site for ATP.

This sequence belongs to the adenylate kinase family. Monomer.

The protein localises to the cytoplasm. The catalysed reaction is AMP + ATP = 2 ADP. It participates in purine metabolism; AMP biosynthesis via salvage pathway; AMP from ADP: step 1/1. Its function is as follows. Catalyzes the reversible transfer of the terminal phosphate group between ATP and AMP. Plays an important role in cellular energy homeostasis and in adenine nucleotide metabolism. This is Adenylate kinase from Nitratiruptor sp. (strain SB155-2).